The sequence spans 362 residues: Ferredoxin--NADP reductase, leaf isozyme 1, chloroplastic (362 aa).

The transit peptide at 1 to 36 (MAAVTAAAVSTSAAAAVTKASPSPAHCFLPCPPRTR) directs the protein to the chloroplast. The FAD-binding FR-type domain occupies 83-205 (KEPYVGKCLL…TGPVGKEMLM (123 aa)). FAD contacts are provided by residues 141–144 (RLYS), 162–164 (CVK), tyrosine 168, 179–181 (VCS), and threonine 220. Positions 144 and 164 each coordinate NADP(+). Cysteine 180 and cysteine 185 form a disulfide bridge. The residue at position 181 (serine 181) is a Phosphoserine. Residues threonine 220, 252-253 (VP), 282-283 (SR), lysine 292, 321-322 (GL), and glutamate 360 contribute to the NADP(+) site.

This sequence belongs to the ferredoxin--NADP reductase type 1 family. In terms of assembly, heterodimer with LFNR2. Component of high molecular weight thylakoid LFNRs-containing protein complexes containing LIR1, LFNR1, LFNR2, TIC62 and TROL proteins. Interacts directly with LFNR1 and LFNR2; LIR1 increases the affinity of LFNR1 and LFNR2 for TIC62 and subsequent thylakoid relocalization. FAD is required as a cofactor. May form interchain disulfide bonds with LIR1.

Its subcellular location is the plastid. It localises to the chloroplast stroma. The protein localises to the chloroplast thylakoid membrane. The catalysed reaction is 2 reduced [2Fe-2S]-[ferredoxin] + NADP(+) + H(+) = 2 oxidized [2Fe-2S]-[ferredoxin] + NADPH. The protein operates within energy metabolism; photosynthesis. In terms of biological role, plays a key role in regulating the relative amounts of cyclic and non-cyclic electron flow to meet the demands of the plant for ATP and reducing power. The sequence is that of Ferredoxin--NADP reductase, leaf isozyme 1, chloroplastic from Oryza sativa subsp. indica (Rice).